We begin with the raw amino-acid sequence, 236 residues long: MRFAAPLVRATLIKRYKRFMADVRFDDGTEVTAHVANSGAMLGTAEPGMEVWLSPASNPERKLKWNWELVTVDGHLVGVNTAHPNGIVAEAVAAGQVAELAGYDSIRREVKYGVNSRIDLLLEAEGRPKCWVEVKNVHLKRGDWAEFPDAVTVRGTKHLAELTDRVRAGERAVMVYLVQREDCAGFRPAADIDPVYARTLAQATRDGVEAICYTCRLAPDGIDLGAPLTMDLTERI.

The protein belongs to the SfsA family.

The chain is Sugar fermentation stimulation protein homolog from Paramagnetospirillum magneticum (strain ATCC 700264 / AMB-1) (Magnetospirillum magneticum).